Consider the following 559-residue polypeptide: Cytoplasmic polyadenylation element-binding protein 1 (559 aa).

A disordered region spans residues 222–243 (SRMDHSSSPLTPPPSASPSGSL). RRM domains are found at residues 304–401 (CKVF…DAQV) and 423–504 (NTVF…PYLE). Zn(2+)-binding residues include C508, C511, C520, C525, C530, C533, H538, and H546.

This sequence belongs to the RRM CPEB family. In terms of tissue distribution, expressed in oocytes (at protein level). During oocyte maturation becomes detectable at stage Ib, and remains ubiquitously distributed within the oocyte cytoplasm until stage II. It then follows a gradual accumulation to the future animal pole during stage III, and remains localized to this pole at stage IV (at protein level). Expressed in oocytes, blastomeres and pre-mid-blastula transition embryos. Its expression during oogenesis is ubiquitous at stages I and II, but gradually accumulated at the periphery of the oocyte in the presumptive animal pole during stage III. Expression was maintained in that region at stage IV, and then became delocalized at stage V to cover a much broader area presumably encompassing the future blastodisc.

Its subcellular location is the cytoplasm. Functionally, sequence-specific RNA-binding protein that regulates mRNA cytoplasmic polyadenylation and translation initiation during oocyte maturation and early development. Binds to the cytoplasmic polyadenylation element (CPE), an uridine-rich sequence element (consensus sequence 5'-UUUUUAU-3') within the mRNA 3'-UTR. The chain is Cytoplasmic polyadenylation element-binding protein 1 (cpeb1) from Danio rerio (Zebrafish).